The following is a 98-amino-acid chain: NADH-ubiquinone oxidoreductase chain 4L (98 aa).

A run of 3 helical transmembrane segments spans residues 1–21 (MSMV…GLLI), 30–50 (LLCL…TILI), and 61–81 (IILL…LVMI).

It belongs to the complex I subunit 4L family. Core subunit of respiratory chain NADH dehydrogenase (Complex I) which is composed of 45 different subunits.

It localises to the mitochondrion inner membrane. It carries out the reaction a ubiquinone + NADH + 5 H(+)(in) = a ubiquinol + NAD(+) + 4 H(+)(out). Core subunit of the mitochondrial membrane respiratory chain NADH dehydrogenase (Complex I) which catalyzes electron transfer from NADH through the respiratory chain, using ubiquinone as an electron acceptor. Part of the enzyme membrane arm which is embedded in the lipid bilayer and involved in proton translocation. This is NADH-ubiquinone oxidoreductase chain 4L (MT-ND4L) from Neovison vison (American mink).